Reading from the N-terminus, the 930-residue chain is Translation initiation factor IF-2 (930 aa).

The tract at residues 31–317 (FVKSASSTVE…RKSKRAKRAE (287 aa)) is disordered. Residues 61–78 (PAAGASNGAPAKPSAPGA) are compositionally biased toward low complexity. 2 stretches are compositionally biased toward pro residues: residues 79–99 (RPGP…PAPA) and 108–120 (PAAP…PPAP). Residues 121–135 (AASAAPPSAPEAPSA) show a composition bias toward low complexity. 2 stretches are compositionally biased toward pro residues: residues 136-158 (RPTP…PAPR) and 178-192 (PRPQ…PRPG). The span at 193–205 (PGAGGPRPGGGPR) shows a compositional bias: gly residues. Residues 212 to 242 (NMPPRPVGGPRPGGGPRPGGGPRPGAGPRPT) are compositionally biased toward pro residues. The segment covering 244 to 301 (GGAGRPGGGGGGNYRGGGAGGGGGAGGAAAGGFRGRPGGGGGRPGQRGGAAGAFGRPG) has biased composition (gly residues). Residues 305–314 (KRGRKSKRAK) are compositionally biased toward basic residues. Residues 426 to 598 (FRPPVVTVMG…VVLTADASLD (173 aa)) form the tr-type G domain. The segment at 435 to 442 (GHVDHGKT) is G1. Residue 435 to 442 (GHVDHGKT) coordinates GTP. The segment at 460–464 (GITQH) is G2. Residues 485 to 488 (DTPG) are G3. GTP is bound by residues 485 to 489 (DTPGH) and 539 to 542 (NKID). A G4 region spans residues 539–542 (NKID). The tract at residues 575-577 (SAK) is G5.

Belongs to the TRAFAC class translation factor GTPase superfamily. Classic translation factor GTPase family. IF-2 subfamily.

Its subcellular location is the cytoplasm. Its function is as follows. One of the essential components for the initiation of protein synthesis. Protects formylmethionyl-tRNA from spontaneous hydrolysis and promotes its binding to the 30S ribosomal subunits. Also involved in the hydrolysis of GTP during the formation of the 70S ribosomal complex. The sequence is that of Translation initiation factor IF-2 from Mycolicibacterium gilvum (strain PYR-GCK) (Mycobacterium gilvum (strain PYR-GCK)).